Consider the following 445-residue polypeptide: MAKKYFGTDGVRGEVGQFPITPDFVLKLGYAAGQVLVQHDGGQKPTVLIGKDTRISGYMLEAALVAGFTAAGVNVIQTGPLPTPGVAYLTRALRLSAGVMISASHNVYSDNGIKFFAEGGVKLSDEIELEIEAKIDEEMKTQPSARLGRARRINGADDRYIEFCKSTFPSHLDLRGLKLVVDTAHGAGYDVAPKVFHELGAQVVSIGDEPNGYNINEKCGATHPKALQAAVLQNEADYGIALDGDGDRLMMVDRNGKVYDGDSLIYVIAKARAREGINIGGVVGTVMTNMAMEIALKEQGVDFCRAKVGDRYVLEQLNQRGWLIGGEASGHILCMDKHNTGDGIISALQVLAALQMLNQDLATICADWQPYPQTMINVRIQKGQKWQEASKDVLAEVEKELEGKGRVVLRASGTEPVVRVMVEARQADWAKKGAERIAAAITGKQ.

The Phosphoserine intermediate role is filled by Ser104. Ser104, Asp243, Asp245, and Asp247 together coordinate Mg(2+). Ser104 carries the post-translational modification Phosphoserine.

It belongs to the phosphohexose mutase family. The cofactor is Mg(2+). Post-translationally, activated by phosphorylation.

It catalyses the reaction alpha-D-glucosamine 1-phosphate = D-glucosamine 6-phosphate. Its function is as follows. Catalyzes the conversion of glucosamine-6-phosphate to glucosamine-1-phosphate. This Neisseria subflava protein is Phosphoglucosamine mutase.